We begin with the raw amino-acid sequence, 419 residues long: UDP-N-acetylglucosamine 1-carboxyvinyltransferase (419 aa).

Position 22 to 23 (22 to 23 (KN)) interacts with phosphoenolpyruvate. A UDP-N-acetyl-alpha-D-glucosamine-binding site is contributed by Arg95. The active-site Proton donor is the Cys119. At Cys119 the chain carries 2-(S-cysteinyl)pyruvic acid O-phosphothioketal. Residues 164–167 (KVSV), Asp308, and Ile330 contribute to the UDP-N-acetyl-alpha-D-glucosamine site.

The protein belongs to the EPSP synthase family. MurA subfamily.

Its subcellular location is the cytoplasm. It catalyses the reaction phosphoenolpyruvate + UDP-N-acetyl-alpha-D-glucosamine = UDP-N-acetyl-3-O-(1-carboxyvinyl)-alpha-D-glucosamine + phosphate. It participates in cell wall biogenesis; peptidoglycan biosynthesis. Functionally, cell wall formation. Adds enolpyruvyl to UDP-N-acetylglucosamine. This Rickettsia conorii (strain ATCC VR-613 / Malish 7) protein is UDP-N-acetylglucosamine 1-carboxyvinyltransferase.